A 623-amino-acid chain; its full sequence is V-type proton ATPase catalytic subunit A (623 aa).

252 to 259 (GAFGCGKT) serves as a coordination point for ATP.

This sequence belongs to the ATPase alpha/beta chains family. In terms of assembly, V-ATPase is a heteromultimeric enzyme composed of a peripheral catalytic V1 complex (main components: subunits A, B, C, D, E, and F) attached to an integral membrane V0 proton pore complex (main component: the proteolipid protein).

It carries out the reaction ATP + H2O + 4 H(+)(in) = ADP + phosphate + 5 H(+)(out). In terms of biological role, catalytic subunit of the peripheral V1 complex of vacuolar ATPase. V-ATPase vacuolar ATPase is responsible for acidifying a variety of intracellular compartments in eukaryotic cells. The protein is V-type proton ATPase catalytic subunit A of Vigna radiata var. radiata (Mung bean).